The sequence spans 681 residues: DNA ligase (681 aa).

NAD(+)-binding positions include 45–49 (DFDFD), 94–95 (SL), and E120. The active-site N6-AMP-lysine intermediate is the K122. NAD(+) contacts are provided by R143, E177, K289, and K313. Zn(2+) contacts are provided by C403, C406, C421, and C426. A BRCT domain is found at 593–681 (SDQQPFAGQS…SLKINFKNTI (89 aa)).

It belongs to the NAD-dependent DNA ligase family. LigA subfamily. Mg(2+) serves as cofactor. It depends on Mn(2+) as a cofactor.

The enzyme catalyses NAD(+) + (deoxyribonucleotide)n-3'-hydroxyl + 5'-phospho-(deoxyribonucleotide)m = (deoxyribonucleotide)n+m + AMP + beta-nicotinamide D-nucleotide.. Its function is as follows. DNA ligase that catalyzes the formation of phosphodiester linkages between 5'-phosphoryl and 3'-hydroxyl groups in double-stranded DNA using NAD as a coenzyme and as the energy source for the reaction. It is essential for DNA replication and repair of damaged DNA. This Leptospira borgpetersenii serovar Hardjo-bovis (strain L550) protein is DNA ligase.